A 320-amino-acid chain; its full sequence is Myoblast determination protein 1 (320 aa).

M1 participates in a covalent cross-link: Peptide (Met-Gly) (interchain with G-Cter in ubiquitin). K104 is subject to N6-methyllysine; by EHMT2. A bHLH domain is found at 109–160 (DRRKAATMRERRRLSKVNEAFETLKRCTSSNPNQRLPKVEILRNAIRYIEGL). Disordered regions lie at residues 174–219 (AAAA…PPSG) and 262–320 (ESPA…YQVL). Polar residues-rich tracts occupy residues 197–207 (SDASSPRSNCS) and 291–301 (GESSGDPTQSP).

As to quaternary structure, efficient DNA binding requires dimerization with another bHLH protein. Seems to form active heterodimers with ITF-2. Interacts with SUV39H1. Interacts with DDX5. Interacts with CHD2. Interacts with TSC22D3. Interacts with SETD3. Interacts with P-TEFB complex; promotes the transcriptional activity of MYOD1 through its CDK9-mediated phosphorylation. Interacts with CSRP3. Interacts with NUPR1. In terms of processing, phosphorylated by CDK9. This phosphorylation promotes its function in muscle differentiation. Acetylated by a complex containing EP300 and PCAF. The acetylation is essential to activate target genes. Conversely, its deacetylation by SIRT1 inhibits its function. Post-translationally, ubiquitinated on the N-terminus; which is required for proteasomal degradation. In terms of processing, methylation at Lys-104 by EHMT2/G9a inhibits myogenic activity.

The protein resides in the nucleus. Functionally, acts as a transcriptional activator that promotes transcription of muscle-specific target genes and plays a role in muscle differentiation. Together with MYF5 and MYOG, co-occupies muscle-specific gene promoter core region during myogenesis. Induces fibroblasts to differentiate into myoblasts. Interacts with and is inhibited by the twist protein. This interaction probably involves the basic domains of both proteins. In Homo sapiens (Human), this protein is Myoblast determination protein 1 (MYOD1).